A 160-amino-acid polypeptide reads, in one-letter code: Biogenesis of lysosome-related organelles complex 1 subunit 5 (160 aa).

Belongs to the BLOC1S5 family. Component of the biogenesis of lysosome-related organelles complex-1 (BLOC-1) composed of Blos1, Blos2, Blos3, Blos4, Dysb, Muted, Pldn and Snapin.

Its function is as follows. Component of the biogenesis of lysosome-related organelles complex-1 (BLOC-1) involved in pigment granule biogenesis. The protein is Biogenesis of lysosome-related organelles complex 1 subunit 5 of Drosophila melanogaster (Fruit fly).